A 92-amino-acid polypeptide reads, in one-letter code: Evasin P942 (92 aa).

A signal peptide spans 1–26 (MEVKTFAFLQIAVLIALGLHLAPAGS). Intrachain disulfides connect Cys44/Cys63, Cys48/Cys65, and Cys59/Cys76. Asn47 is a glycosylation site (N-linked (GlcNAc...) asparagine). A glycan (N-linked (GlcNAc...) asparagine) is linked at Asn70.

Its subcellular location is the secreted. Salivary chemokine-binding protein which binds to host chemokines CXCL1, CXCL2, CXCL3, CXCL4, CXCL5, CXCL6, CXCL10, CXCL11 and CXCL13. In Ixodes ricinus (Common tick), this protein is Evasin P942.